The following is a 404-amino-acid chain: S-adenosylmethionine synthase (404 aa).

ATP is bound at residue histidine 18. Aspartate 20 contacts Mg(2+). Glutamate 46 serves as a coordination point for K(+). Glutamate 59 and glutamine 102 together coordinate L-methionine. Residues 102–112 (QSPEIAQGVDH) are flexible loop. Residues 178 to 180 (DGK), 249 to 250 (KF), aspartate 258, 264 to 265 (RK), alanine 281, and lysine 285 contribute to the ATP site. Position 258 (aspartate 258) interacts with L-methionine. Position 289 (lysine 289) interacts with L-methionine.

This sequence belongs to the AdoMet synthase family. In terms of assembly, homotetramer; dimer of dimers. It depends on Mg(2+) as a cofactor. The cofactor is K(+).

The protein localises to the cytoplasm. The catalysed reaction is L-methionine + ATP + H2O = S-adenosyl-L-methionine + phosphate + diphosphate. Its pathway is amino-acid biosynthesis; S-adenosyl-L-methionine biosynthesis; S-adenosyl-L-methionine from L-methionine: step 1/1. Its function is as follows. Catalyzes the formation of S-adenosylmethionine (AdoMet) from methionine and ATP. The overall synthetic reaction is composed of two sequential steps, AdoMet formation and the subsequent tripolyphosphate hydrolysis which occurs prior to release of AdoMet from the enzyme. This Rhodococcus opacus (strain B4) protein is S-adenosylmethionine synthase.